Here is a 157-residue protein sequence, read N- to C-terminus: Ribosome-binding factor A (157 aa).

A disordered region spans residues arginine 126–glutamate 157. Over residues glutamate 145–glutamate 157 the composition is skewed to acidic residues.

It belongs to the RbfA family. As to quaternary structure, monomer. Binds 30S ribosomal subunits, but not 50S ribosomal subunits or 70S ribosomes.

The protein localises to the cytoplasm. One of several proteins that assist in the late maturation steps of the functional core of the 30S ribosomal subunit. Associates with free 30S ribosomal subunits (but not with 30S subunits that are part of 70S ribosomes or polysomes). Required for efficient processing of 16S rRNA. May interact with the 5'-terminal helix region of 16S rRNA. In Bifidobacterium longum (strain DJO10A), this protein is Ribosome-binding factor A.